A 169-amino-acid polypeptide reads, in one-letter code: Benzoate 1,2-dioxygenase subunit beta (169 aa).

Belongs to the bacterial ring-hydroxylating dioxygenase beta subunit family. In terms of assembly, this dioxygenase system consists of three proteins: the two subunits of the hydroxylase (BenA and BenB), and an electron transfer component (BenC).

It catalyses the reaction benzoate + NADH + O2 + H(+) = (1R,6S)-1,6-dihydroxycyclohexa-2,4-diene-1-carboxylate + NAD(+). Its pathway is aromatic compound metabolism; benzoate degradation via hydroxylation; catechol from benzoate: step 1/2. Its function is as follows. Degradation of benzoate to 2-hydro-1,2-dihydroxybenzoate (DHB). The beta subunit may be responsible for the substrate specificity of the enzyme. In Acinetobacter baylyi (strain ATCC 33305 / BD413 / ADP1), this protein is Benzoate 1,2-dioxygenase subunit beta (benB).